The chain runs to 602 residues: MALSFFSGGGSASYAKYFDIRLDEGYIVFRGGEQEAASAQLSGKLLLCLSEPLAAKHVRLNLTGISRVCWHLPSGSASGSRKSWREKVFYEKTWTFRDAGKSKTEVLAAGNYEFPFHVILEGSMPESVEGLSDTYVTYRFKAEIGRKYAKDIVVRKPLRIIRTLESSALELSHAMSVENIWPNKIEYSISTPTKAVIFGTSLRVDFKLIPLLKGLKIGQIVSQLIESHDLTLNPEDPDSIRNTYKSTRTIVSDEYELDDEGSLEIIDEEAEGYQFSRYLDLPKTLTRCLQDTDTRGIKIRHKLKFRVQLLNPDGHISELRATLPVSIFISPNLAIDENNNLVDQTPQTARRAVDDIAQQAPPLYGEHQFDQLYSEVDPSGYRTPGPGSGPGTPFGALSRNISSENLASMNALTSTDLSVSALQTRLSNLHASRFSNPSPTEIDNHADSEQRRLGISTADYFGPSSGSNSHSPASPELSRRPSDEGYRDHDHIPSGMATPFHPQYAEVETLSRVPSYSTAMRSTVRPCDSELPDYQAVVAEDTAMPALQSPQQAYIRSAGRGTSMNTGIDVHQLRSGHFSSRTSNSHDEEDRRLRLVQARARV.

Disordered stretches follow at residues Glu375–Ser398 and Thr457–Pro499. The segment covering Pro463–Pro475 has biased composition (low complexity). A compositionally biased stretch (basic and acidic residues) spans Leu477–Ile492.

The protein belongs to the arrestin family. Interacts with hulA.

Functionally, component of the regulatory network controlling carbon source utilization through ubiquitination and deubiquitination involving creA, creB, creC, creD and acrB. May be involved in signaling by recognizing appropriately phosphorylated substrates via its arrestin domains and then recruit a HECT-type ubiquitin ligase such as hulA, leading to ubiquitination of the substrate, providing a link between ubiquitination and phosphorylation in protein regulation and stability. This is Probable HECT-type ubiquitin ligase-interacting protein creD (creD) from Aspergillus clavatus (strain ATCC 1007 / CBS 513.65 / DSM 816 / NCTC 3887 / NRRL 1 / QM 1276 / 107).